The following is a 155-amino-acid chain: Large ribosomal subunit protein uL22c (155 aa).

This sequence belongs to the universal ribosomal protein uL22 family. Part of the 50S ribosomal subunit.

The protein localises to the plastid. It localises to the chloroplast. Functionally, this protein binds specifically to 23S rRNA. The globular domain of the protein is located near the polypeptide exit tunnel on the outside of the subunit, while an extended beta-hairpin is found that lines the wall of the exit tunnel in the center of the 70S ribosome. The polypeptide is Large ribosomal subunit protein uL22c (rpl22) (Solanum bulbocastanum (Wild potato)).